Consider the following 255-residue polypeptide: Taurine import ATP-binding protein TauB (255 aa).

One can recognise an ABC transporter domain in the interval 2-229; the sequence is LNVSGLWAEY…RYAEGEPCRA (228 aa). 34–41 lines the ATP pocket; the sequence is GPSGCGKT.

It belongs to the ABC transporter superfamily. Taurine importer (TC 3.A.1.17.1) family. In terms of assembly, the complex is composed of two ATP-binding proteins (TauB), two transmembrane proteins (TauC) and a solute-binding protein (TauA).

It localises to the cell inner membrane. It carries out the reaction taurine(out) + ATP + H2O = taurine(in) + ADP + phosphate + H(+). Functionally, part of the ABC transporter complex TauABC involved in taurine import. Responsible for energy coupling to the transport system. The chain is Taurine import ATP-binding protein TauB from Yersinia pestis bv. Antiqua (strain Antiqua).